Reading from the N-terminus, the 479-residue chain is Ribosomal RNA small subunit methyltransferase F (479 aa).

Residues 125 to 131 (AAAPGSK), Glu149, Asp176, and Asp194 each bind S-adenosyl-L-methionine. Cys247 acts as the Nucleophile in catalysis.

The protein belongs to the class I-like SAM-binding methyltransferase superfamily. RsmB/NOP family.

It is found in the cytoplasm. It carries out the reaction cytidine(1407) in 16S rRNA + S-adenosyl-L-methionine = 5-methylcytidine(1407) in 16S rRNA + S-adenosyl-L-homocysteine + H(+). Functionally, specifically methylates the cytosine at position 1407 (m5C1407) of 16S rRNA. The sequence is that of Ribosomal RNA small subunit methyltransferase F from Salmonella paratyphi B (strain ATCC BAA-1250 / SPB7).